Here is a 759-residue protein sequence, read N- to C-terminus: MVHFLHPGHTPRNIVPPDAQKDALGCCVVQEEASPYTLVNICLNVLIANLEKLCSERPDGTLCLPEHWSFPQEVAERFLRVMTWQGKLTDRTASIFRGNQMKLKLVNIQKAKISTAAFIKAFCRHKLIELNATAVHADLPVPDIISGLCSNRWIQQNLQCLLLDSTSIPQNSRLLFFSQLTGLRILSVFNVCFHTEDLANVSQLPRLESLDISNTLVTDISALLTCKDRLKSLTMHYLKCLAMTKSQILAVIRELKCLLHLDISDHRQLKSDLAFHLLQQKDILPNVVSLDISGGNCITDEAVELFIRLRPAMQFVGLLATDAGSSDFFTTKQGLRVAGGASMSQISEALSRYRNRSCFVKEALHRLFTETFSMEVTMPAILKLVAIGMRNHPLDLRVQFTASACALNLTRQGLAKGMPVRLLSEVTCLLFKALKNFPHYQQLQKNCLLSLTNSRILVDVPFDRFDAAKFVMRWLCKHENPKMQTMAVSVTSILALQLSPEQTAQLEELFMAVKELLAIVKQKTTENLDDVTFLFTLKALWNLTDGSPAACKHFIENQGLQIFIQVLETFSESAIQSKVLGLLNNIAEVRELSSKLVTEDVLKHINSLLCSREMEVSYFAAGIIAHLTSDRQLWISRDFQRRTLLQDLHATIQNWPSSSCKMTALVTYRSFKTFFPLLGNFSQPEVQLWALWAMYHVCSKNPSKYCKMLVEEEGLQLLCDIQEHSEATPKAQQIAASILDDFRMHFMNYQRPTLCQMPF.

LRR repeat units follow at residues 204-227 (LPRLESLDISNTLVTDISALLTCK), 235-260 (MHYLKCLAMTKSQILAVIRELKCLLH), and 490-513 (VTSILALQLSPEQTAQLEELFMAV).

The protein belongs to the zyg-11 family.

Functionally, probably acts as a target recruitment subunit in an E3 ubiquitin ligase complex ZYGA-CUL2-elongin BC. The chain is Protein zyg-11 homolog A (ZYG11A) from Homo sapiens (Human).